The sequence spans 475 residues: Methyltransferase-like protein 25B (475 aa).

Positions 186–210 (QRLVERAQRLDQELLQTLEKEEKRN) form a coiled coil. The chain crosses the membrane as a helical span at residues 406-426 (VVAFFSLALLLAPLVETLILL).

This sequence belongs to the METTL25 family.

The protein resides in the membrane. The protein is Methyltransferase-like protein 25B of Bos taurus (Bovine).